A 569-amino-acid chain; its full sequence is BTB/POZ domain-containing protein At3g50840 (569 aa).

Residues 18–87 enclose the BTB domain; it reads SDIEIEVDDI…SYGFKVDISV (70 aa). The region spanning 194–459 is the NPH3 domain; the sequence is ELWFEDLTEL…VQVLFLEQLQ (266 aa). Residues 240-259 are compositionally biased toward low complexity; the sequence is ISRSSSASSSSSSSSTTIAS. Residues 240–261 are disordered; sequence ISRSSSASSSSSSSSTTIASEN. Tyrosine 400 is modified (phosphotyrosine).

It belongs to the NPH3 family.

It participates in protein modification; protein ubiquitination. In terms of biological role, may act as a substrate-specific adapter of an E3 ubiquitin-protein ligase complex (CUL3-RBX1-BTB) which mediates the ubiquitination and subsequent proteasomal degradation of target proteins. The chain is BTB/POZ domain-containing protein At3g50840 from Arabidopsis thaliana (Mouse-ear cress).